The sequence spans 580 residues: 2-succinyl-5-enolpyruvyl-6-hydroxy-3-cyclohexene-1-carboxylate synthase (580 aa).

The protein belongs to the TPP enzyme family. MenD subfamily. As to quaternary structure, homodimer. It depends on Mg(2+) as a cofactor. The cofactor is Mn(2+). Thiamine diphosphate serves as cofactor.

It carries out the reaction isochorismate + 2-oxoglutarate + H(+) = 5-enolpyruvoyl-6-hydroxy-2-succinyl-cyclohex-3-ene-1-carboxylate + CO2. It participates in quinol/quinone metabolism; 1,4-dihydroxy-2-naphthoate biosynthesis; 1,4-dihydroxy-2-naphthoate from chorismate: step 2/7. The protein operates within quinol/quinone metabolism; menaquinone biosynthesis. Its function is as follows. Catalyzes the thiamine diphosphate-dependent decarboxylation of 2-oxoglutarate and the subsequent addition of the resulting succinic semialdehyde-thiamine pyrophosphate anion to isochorismate to yield 2-succinyl-5-enolpyruvyl-6-hydroxy-3-cyclohexene-1-carboxylate (SEPHCHC). The sequence is that of 2-succinyl-5-enolpyruvyl-6-hydroxy-3-cyclohexene-1-carboxylate synthase from Listeria monocytogenes serovar 1/2a (strain ATCC BAA-679 / EGD-e).